Consider the following 181-residue polypeptide: MDELTAQALKAFTRRYCGAWQEKHGSWPLSEELYGVPSPCIISSTRDAVYWQPQPFEGEENVNAVERAFDIVVQPALHAFYTTQFAGDMPAQFADEKLTLLQTWSQDDFRRVQENLIGHLVTQKRLRLSPTLFIATQENELEVISICNLSGEVIKETLGTRHRIVLAATLAEFLTQLNPLL.

The protein belongs to the Syd family.

Its subcellular location is the cell inner membrane. Functionally, interacts with the SecY protein in vivo. May bind preferentially to an uncomplexed state of SecY, thus functioning either as a chelating agent for excess SecY in the cell or as a regulatory factor that negatively controls the translocase function. The protein is Protein Syd of Salmonella arizonae (strain ATCC BAA-731 / CDC346-86 / RSK2980).